The sequence spans 311 residues: Tryptophan 2,3-dioxygenase (311 aa).

The interval 1–37 (MQPPGGDAPAGCPFSGARAAQPAQAAHEAPHVPGEAD) is disordered. Positions 17–27 (ARAAQPAQAAH) are enriched in low complexity. Residues 80–84 (FIIQH), Tyr142, and Arg146 each bind substrate. Residue His269 participates in heme binding. Thr283 lines the substrate pocket.

This sequence belongs to the tryptophan 2,3-dioxygenase family. In terms of assembly, homotetramer. It depends on heme as a cofactor.

It catalyses the reaction L-tryptophan + O2 = N-formyl-L-kynurenine. It participates in amino-acid degradation; L-tryptophan degradation via kynurenine pathway; L-kynurenine from L-tryptophan: step 1/2. Functionally, heme-dependent dioxygenase that catalyzes the oxidative cleavage of the L-tryptophan (L-Trp) pyrrole ring and converts L-tryptophan to N-formyl-L-kynurenine. Catalyzes the oxidative cleavage of the indole moiety. This is Tryptophan 2,3-dioxygenase from Burkholderia cenocepacia (strain ATCC BAA-245 / DSM 16553 / LMG 16656 / NCTC 13227 / J2315 / CF5610) (Burkholderia cepacia (strain J2315)).